Consider the following 43-residue polypeptide: Snaclec lebecetin subunit beta (43 aa).

Residues 1–43 form the C-type lectin domain; it reads ALNCASGWSGGYDQHCYKVFDIPPSWAADEKFCKQQTSGGHLV. Residues Cys4 and Cys16 are joined by a disulfide bond.

In terms of assembly, heterodimer of subunits alpha and beta; disulfide-linked. Ca(2+) is required as a cofactor. In terms of processing, glycosylated. As to expression, expressed by the venom gland.

The protein resides in the secreted. Its function is as follows. Binds to the platelet GPIb/IX/V receptor system and inhibits ristocetin-induced platelet aggregation in human platelet-rich plasma. Strongly inhibits platelet aggregation induced by ADP, calcium ionophore, thrombin and collagen. Does not inhibit U46619-induced platelet aggregation. The chain is Snaclec lebecetin subunit beta from Macrovipera lebetinus (Levantine viper).